Here is a 149-residue protein sequence, read N- to C-terminus: Large ribosomal subunit protein uL13 (149 aa).

It belongs to the universal ribosomal protein uL13 family. As to quaternary structure, part of the 50S ribosomal subunit.

Its function is as follows. This protein is one of the early assembly proteins of the 50S ribosomal subunit, although it is not seen to bind rRNA by itself. It is important during the early stages of 50S assembly. This Chlorobium luteolum (strain DSM 273 / BCRC 81028 / 2530) (Pelodictyon luteolum) protein is Large ribosomal subunit protein uL13.